We begin with the raw amino-acid sequence, 565 residues long: Dihydroxy-acid dehydratase (565 aa).

Position 80 (Asp80) interacts with Mg(2+). Cys121 is a [2Fe-2S] cluster binding site. Mg(2+) is bound by residues Asp122 and Lys123. The residue at position 123 (Lys123) is an N6-carboxylysine. Cys194 lines the [2Fe-2S] cluster pocket. Glu447 provides a ligand contact to Mg(2+). The active-site Proton acceptor is the Ser473.

It belongs to the IlvD/Edd family. As to quaternary structure, homodimer. The cofactor is [2Fe-2S] cluster. Mg(2+) serves as cofactor.

The catalysed reaction is (2R)-2,3-dihydroxy-3-methylbutanoate = 3-methyl-2-oxobutanoate + H2O. The enzyme catalyses (2R,3R)-2,3-dihydroxy-3-methylpentanoate = (S)-3-methyl-2-oxopentanoate + H2O. The protein operates within amino-acid biosynthesis; L-isoleucine biosynthesis; L-isoleucine from 2-oxobutanoate: step 3/4. Its pathway is amino-acid biosynthesis; L-valine biosynthesis; L-valine from pyruvate: step 3/4. Functions in the biosynthesis of branched-chain amino acids. Catalyzes the dehydration of (2R,3R)-2,3-dihydroxy-3-methylpentanoate (2,3-dihydroxy-3-methylvalerate) into 2-oxo-3-methylpentanoate (2-oxo-3-methylvalerate) and of (2R)-2,3-dihydroxy-3-methylbutanoate (2,3-dihydroxyisovalerate) into 2-oxo-3-methylbutanoate (2-oxoisovalerate), the penultimate precursor to L-isoleucine and L-valine, respectively. This is Dihydroxy-acid dehydratase from Chlorobium luteolum (strain DSM 273 / BCRC 81028 / 2530) (Pelodictyon luteolum).